We begin with the raw amino-acid sequence, 121 residues long: Large ribosomal subunit protein bL19 (121 aa).

The protein belongs to the bacterial ribosomal protein bL19 family.

Functionally, this protein is located at the 30S-50S ribosomal subunit interface and may play a role in the structure and function of the aminoacyl-tRNA binding site. The polypeptide is Large ribosomal subunit protein bL19 (Legionella pneumophila (strain Paris)).